Consider the following 142-residue polypeptide: Large ribosomal subunit protein bL17 (142 aa).

This sequence belongs to the bacterial ribosomal protein bL17 family. Part of the 50S ribosomal subunit. Contacts protein L32.

The chain is Large ribosomal subunit protein bL17 from Brucella canis (strain ATCC 23365 / NCTC 10854 / RM-666).